A 317-amino-acid chain; its full sequence is Small ribosomal subunit protein RACK1 (317 aa).

7 WD repeats span residues 15-55 (GHNG…DNQY), 64-103 (GHSH…TTQR), 106-146 (GHKG…ATLT), 148-188 (HNDW…VNAD), 191-230 (GHTG…TLYT), 232-272 (EAKA…DELK), and 281-317 (AKDP…TPSA).

It belongs to the WD repeat G protein beta family. Ribosomal protein RACK1 subfamily. In terms of assembly, component of the small ribosomal subunit. Mature ribosomes consist of a small (40S) and a large (60S) subunit. The 40S subunit contains about 32 different proteins and 1 molecule of RNA (18S). The 60S subunit contains 45 different proteins and 3 molecules of RNA (25S, 5.8S and 5S).

It localises to the cytoplasm. Functionally, component of the ribosome, a large ribonucleoprotein complex responsible for the synthesis of proteins in the cell. The small ribosomal subunit (SSU) binds messenger RNAs (mRNAs) and translates the encoded message by selecting cognate aminoacyl-transfer RNA (tRNA) molecules. The large subunit (LSU) contains the ribosomal catalytic site termed the peptidyl transferase center (PTC), which catalyzes the formation of peptide bonds, thereby polymerizing the amino acids delivered by tRNAs into a polypeptide chain. The nascent polypeptides leave the ribosome through a tunnel in the LSU and interact with protein factors that function in enzymatic processing, targeting, and the membrane insertion of nascent chains at the exit of the ribosomal tunnel. Located at the head of the 40S ribosomal subunit in the vicinity of the mRNA exit channel, it serves as a scaffold protein that can recruit other proteins to the ribosome. Involved in the negative regulation of translation of a specific subset of proteins. Plays a role in morphogenesis and pathogenesis. The chain is Small ribosomal subunit protein RACK1 from Candida albicans (strain SC5314 / ATCC MYA-2876) (Yeast).